The following is a 118-amino-acid chain: Vesicle-associated membrane protein 1 (118 aa).

Positions 1–15 (MSAPAQPPAEGTEGA) are enriched in low complexity. A disordered region spans residues 1-36 (MSAPAQPPAEGTEGAAPGGGPPGPPPNMTSNRRLQQ). Over 1-96 (MSAPAQPPAE…KRKYWWKNCK (96 aa)) the chain is Cytoplasmic. The region spanning 33–93 (RLQQTQAQVE…AKLKRKYWWK (61 aa)) is the v-SNARE coiled-coil homology domain. Position 63 is a phosphoserine (Ser63). Residues 97–116 (MMIMLGAICAIIVVVIVIYF) form a helical; Anchor for type IV membrane protein membrane-spanning segment. At 117–118 (FT) the chain is on the vesicular side.

This sequence belongs to the synaptobrevin family. As to quaternary structure, interacts with VAPA and VAPB. Post-translationally, (Microbial infection) Targeted and hydrolyzed by C.botulinum neurotoxin type X (BoNT/X) which hydrolyzes the 68-Arg-|-Ala-69 bond and probably inhibits neurotransmitter release. It remains unknown whether BoNT/X is ever produced, or what organisms it targets. As to expression, highly expressed in the zona incerta and rostral periolivary region of the brain. Other neuroanatomical regions show negligible expression. Expressed in the retina, expression observed in the outer segments of the photoreceptors, in the outer and inner plexiform layers, and in a subset of ganglion cells.

It localises to the cytoplasmic vesicle. The protein localises to the secretory vesicle. Its subcellular location is the synaptic vesicle membrane. The protein resides in the synapse. It is found in the synaptosome. It localises to the cytoplasmic vesicle membrane. In terms of biological role, involved in the targeting and/or fusion of transport vesicles to their target membrane. This is Vesicle-associated membrane protein 1 (Vamp1) from Mus musculus (Mouse).